A 341-amino-acid polypeptide reads, in one-letter code: Cytochrome c biogenesis protein CcsA (341 aa).

Transmembrane regions (helical) follow at residues 16–36 (LILL…GMSI), 37–57 (LPTL…TLLG), 68–88 (LSNL…VHLI), 97–117 (LVGV…ALSL), 142–162 (VMML…AFLI), 249–269 (IIGL…VWAN), 276–296 (WSWD…AAYL), and 310–330 (AILA…VNLL).

The protein belongs to the CcmF/CycK/Ccl1/NrfE/CcsA family. May interact with ccs1.

Its subcellular location is the cellular thylakoid membrane. In terms of biological role, required during biogenesis of c-type cytochromes (cytochrome c6 and cytochrome f) at the step of heme attachment. The protein is Cytochrome c biogenesis protein CcsA of Rippkaea orientalis (strain PCC 8801 / RF-1) (Cyanothece sp. (strain PCC 8801)).